A 60-amino-acid polypeptide reads, in one-letter code: uncharacterized protein (60 aa).

A helical transmembrane segment spans residues 38 to 58 (SILAGGIIPVLFFFPLFLFLY).

Its subcellular location is the membrane. This is an uncharacterized protein from Saccharomyces cerevisiae (strain ATCC 204508 / S288c) (Baker's yeast).